The chain runs to 293 residues: Elongation factor Ts (293 aa).

An involved in Mg(2+) ion dislocation from EF-Tu region spans residues 80-83 (TDFV).

This sequence belongs to the EF-Ts family.

It localises to the cytoplasm. Functionally, associates with the EF-Tu.GDP complex and induces the exchange of GDP to GTP. It remains bound to the aminoacyl-tRNA.EF-Tu.GTP complex up to the GTP hydrolysis stage on the ribosome. The protein is Elongation factor Ts of Enterococcus faecalis (strain ATCC 700802 / V583).